Consider the following 293-residue polypeptide: ATP synthase subunit gamma, mitochondrial (293 aa).

The transit peptide at 1-21 (MFALRTAARPAARSVGATRNY) directs the protein to the mitochondrion.

F-type ATP synthases have 2 components, the catalytic core F(1) and the membrane-embedded component F(0), linked together by a central stalk and a peripheral stalk. The central stalk, also called rotor shaft, is often seen as part of F(1). The peripheral stalk is seen as part of F(0). F(0) contains the membrane channel next to the rotor. F-type ATP synthases form dimers but each monomer functions independently in ATP generation. The dimer consists of 17 different polypeptides: ATP1 (subunit alpha, 3 molecules per monomer, part of F(1)), ATP2 (subunit beta, 3 copies per monomer, part of F(1)), ATP3 (subunit gamma, part of the central stalk), ATP4 (subunit b, part of the peripheral stalk), ATP5/OSCP (subunit 5/OSCP, part of the peripheral stalk), ATP6 (subunit a, part of the peripheral stalk), ATP7 (subunit d, part of the peripheral stalk), ATP8 (subunit 8, part of the peripheral stalk), OLI1 (subunit c, part of the rotor, 10 molecules per monomer), ATP14 (subunit h, part of the peripheral stalk), ATP15 (subunit epsilon, part of the central stalk), ATP16 (subunit delta, part of the central stalk), ATP17 (subunit f, part of the peripheral stalk), ATP18 (subunit i/j, part of the peripheral stalk), ATP19 (subunit k, dimer-specific, at interface between monomers), ATP20 (subunit g, at interface between monomers), TIM11 (subunit e, at interface between monomers).

Its subcellular location is the mitochondrion inner membrane. Mitochondrial membrane ATP synthase (F(1)F(0) ATP synthase or Complex V) produces ATP from ADP in the presence of a proton gradient across the membrane which is generated by electron transport complexes of the respiratory chain. F-type ATP synthases consist of two structural domains, F(1) - containing the extramembraneous catalytic core, and F(0) - containing the membrane proton channel, linked together by a central stalk and a peripheral stalk. During catalysis, ATP synthesis in the catalytic domain of F(1) is coupled via a rotary mechanism of the central stalk subunits to proton translocation. Part of the complex F(1) domain and the central stalk which is part of the complex rotary element. The gamma/ATP3 subunit protrudes into the catalytic domain formed of alpha/ATP1(3)beta/ATP2(3). Rotation of the central stalk against the surrounding alpha/ATP1(3)beta/ATP2(3) subunits leads to hydrolysis of ATP in three separate catalytic sites on the beta/ATP2 subunits. The chain is ATP synthase subunit gamma, mitochondrial from Yarrowia lipolytica (strain CLIB 122 / E 150) (Yeast).